Consider the following 171-residue polypeptide: MAGYKENNNIDNNYIEKLVNIRRVVKVVKGGRIFGFSALVVVGDGNGKVGYGTGKAREVPVAIQKAMDKARKAMKNVPLVNGTLHYSIISNVGAAKVYMQPASEGTGVIAGGPMRSVLEAVGVHNILAKCNGTRNPISVVRATVEGLTSMLSPQLVATKRGMTVDQITGEE.

The S5 DRBM domain occupies 14–77; the sequence is YIEKLVNIRR…DKARKAMKNV (64 aa).

It belongs to the universal ribosomal protein uS5 family. Part of the 30S ribosomal subunit. Contacts proteins S4 and S8.

With S4 and S12 plays an important role in translational accuracy. Its function is as follows. Located at the back of the 30S subunit body where it stabilizes the conformation of the head with respect to the body. The chain is Small ribosomal subunit protein uS5 from Vesicomyosocius okutanii subsp. Calyptogena okutanii (strain HA).